The sequence spans 270 residues: Formamidopyrimidine-DNA glycosylase (270 aa).

Pro2 (schiff-base intermediate with DNA) is an active-site residue. Catalysis depends on Glu3, which acts as the Proton donor. The Proton donor; for beta-elimination activity role is filled by Lys58. DNA contacts are provided by His92, Arg111, and Arg153. Residues 238-270 (SVYGASVCPVCGGALRQIRLAQRGTWFCPRCQR) form an FPG-type zinc finger. The active-site Proton donor; for delta-elimination activity is the Arg260.

The protein belongs to the FPG family. In terms of assembly, monomer. Zn(2+) serves as cofactor.

It carries out the reaction Hydrolysis of DNA containing ring-opened 7-methylguanine residues, releasing 2,6-diamino-4-hydroxy-5-(N-methyl)formamidopyrimidine.. The catalysed reaction is 2'-deoxyribonucleotide-(2'-deoxyribose 5'-phosphate)-2'-deoxyribonucleotide-DNA = a 3'-end 2'-deoxyribonucleotide-(2,3-dehydro-2,3-deoxyribose 5'-phosphate)-DNA + a 5'-end 5'-phospho-2'-deoxyribonucleoside-DNA + H(+). Its function is as follows. Involved in base excision repair of DNA damaged by oxidation or by mutagenic agents. Acts as a DNA glycosylase that recognizes and removes damaged bases. Has a preference for oxidized purines, such as 7,8-dihydro-8-oxoguanine (8-oxoG). Has AP (apurinic/apyrimidinic) lyase activity and introduces nicks in the DNA strand. Cleaves the DNA backbone by beta-delta elimination to generate a single-strand break at the site of the removed base with both 3'- and 5'-phosphates. The protein is Formamidopyrimidine-DNA glycosylase of Halorhodospira halophila (strain DSM 244 / SL1) (Ectothiorhodospira halophila (strain DSM 244 / SL1)).